Consider the following 478-residue polypeptide: Protein trichome birefringence-like 20 (478 aa).

Residues 10 to 30 (IGLVIFPLILLTIAPILYLFF) form a helical; Signal-anchor for type II membrane protein membrane-spanning segment. Positions 50–68 (SSAISSPSRYNHSSSSSDS) are enriched in low complexity. The segment at 50–125 (SSAISSPSRY…KEHRRKKRKR (76 aa)) is disordered. Polar residues predominate over residues 92–110 (SSSLHNNDRLSISSSNGHH). Basic residues predominate over residues 112–125 (VTPKKEHRRKKRKR). Positions 200–202 (GDS) match the GDS motif motif. Positions 447–461 (DCVHWCLPGPIDSWN) match the DCXHWCLPGXXDXWN motif motif.

This sequence belongs to the PC-esterase family. TBL subfamily.

The protein resides in the membrane. Its function is as follows. May act as a bridging protein that binds pectin and other cell wall polysaccharides. Probably involved in maintaining esterification of pectins. May be involved in the specific O-acetylation of cell wall polymers. The chain is Protein trichome birefringence-like 20 (TBL20) from Arabidopsis thaliana (Mouse-ear cress).